A 351-amino-acid chain; its full sequence is Peptide chain release factor 1 (351 aa).

Gln-233 carries the post-translational modification N5-methylglutamine.

It belongs to the prokaryotic/mitochondrial release factor family. In terms of processing, methylated by PrmC. Methylation increases the termination efficiency of RF1.

Its subcellular location is the cytoplasm. Its function is as follows. Peptide chain release factor 1 directs the termination of translation in response to the peptide chain termination codons UAG and UAA. This chain is Peptide chain release factor 1 (prfA), found in Treponema pallidum (strain Nichols).